Reading from the N-terminus, the 90-residue chain is SAGA-associated factor 11 (90 aa).

Residues 63–84 (FSCDNCGRKIAGGRFAQHINKC) form an SGF11-type zinc finger.

It belongs to the SGF11 family. In terms of assembly, component of the 1.8 MDa SAGA transcription coactivator-HAT complex. SAGA is built of 5 distinct domains with specialized functions. Within the SAGA complex, SUS1, SGF11, SGF73 and UBP8 form an additional subcomplex of SAGA called the DUB module (deubiquitination module). Interacts directly with SGF73, SUS1 and UBP8.

The protein resides in the nucleus. Functions as a component of the transcription regulatory histone acetylation (HAT) complex SAGA. At the promoters, SAGA is required for recruitment of the basal transcription machinery. It influences RNA polymerase II transcriptional activity through different activities such as TBP interaction and promoter selectivity, interaction with transcription activators, and chromatin modification through histone acetylation and deubiquitination. SAGA acetylates nucleosomal histone H3 to some extent (to form H3K9ac, H3K14ac, H3K18ac and H3K23ac). SAGA interacts with DNA via upstream activating sequences (UASs). Involved in transcriptional regulation of a subset of SAGA-regulated genes. Within the SAGA complex, participates in a subcomplex, that specifically deubiquitinates histones H2B. In Lodderomyces elongisporus (strain ATCC 11503 / CBS 2605 / JCM 1781 / NBRC 1676 / NRRL YB-4239) (Yeast), this protein is SAGA-associated factor 11.